A 542-amino-acid polypeptide reads, in one-letter code: Calcium/calmodulin-dependent protein kinase type II subunit beta (542 aa).

The 259-residue stretch at 14-272 (YQLYEDIGKG…AHEALKHPWV (259 aa)) folds into the Protein kinase domain. Y17 is modified (phosphotyrosine). ATP-binding positions include 20 to 28 (IGKGAFSVV) and K43. D136 functions as the Proton acceptor in the catalytic mechanism. Residues 283-292 (HRQETVECLK) are autoinhibitory domain. Position 287 is a phosphothreonine; by autocatalysis (T287). Residues 291–301 (LKKFNARRKLK) are calmodulin-binding. A phosphothreonine; by autocatalysis mark is found at T306 and T307. The tract at residues 349–376 (ADGVKPQTNSTKNSSAITSPKGSLPPAA) is disordered. Polar residues predominate over residues 354-369 (PQTNSTKNSSAITSPK). 4 positions are modified to phosphoserine: S367, S371, S394, and S397. Phosphothreonine occurs at positions 400 and 401.

It belongs to the protein kinase superfamily. CAMK Ser/Thr protein kinase family. CaMK subfamily. As to quaternary structure, CAMK2 is composed of 4 different chains: alpha (CAMK2A), beta (CAMK2B), gamma (CAMK2G), and delta (CAMK2D). The different isoforms assemble into homo- or heteromultimeric holoenzymes composed of 12 subunits with two hexameric rings stacked one on top of the other. Interacts with SYNGAP1, CAMK2N2 and MPDZ. Interacts with FOXO3. Interacts (when in a kinase inactive state not associated with calmodulin) with ARC; leading to target ARC to inactive synapses. Interacts with CAMK2N1; this interaction requires CAMK2B activation by Ca(2+). Autophosphorylation of Thr-287 following activation by Ca(2+)/calmodulin. Phosphorylation of Thr-287 locks the kinase into an activated state.

It is found in the cytoplasm. Its subcellular location is the cytoskeleton. The protein localises to the microtubule organizing center. The protein resides in the centrosome. It localises to the sarcoplasmic reticulum membrane. It is found in the synapse. The catalysed reaction is L-seryl-[protein] + ATP = O-phospho-L-seryl-[protein] + ADP + H(+). It catalyses the reaction L-threonyl-[protein] + ATP = O-phospho-L-threonyl-[protein] + ADP + H(+). Activated by Ca(2+)/calmodulin. Binding of calmodulin results in conformational change that relieves intrasteric autoinhibition and allows autophosphorylation of Thr-287 which turns the kinase in a constitutively active form and confers to the kinase a Ca(2+)-independent activity. Its function is as follows. Calcium/calmodulin-dependent protein kinase that functions autonomously after Ca(2+)/calmodulin-binding and autophosphorylation, and is involved in dendritic spine and synapse formation, neuronal plasticity and regulation of sarcoplasmic reticulum Ca(2+) transport in skeletal muscle. In neurons, plays an essential structural role in the reorganization of the actin cytoskeleton during plasticity by binding and bundling actin filaments in a kinase-independent manner. This structural function is required for correct targeting of CaMK2A, which acts downstream of NMDAR to promote dendritic spine and synapse formation and maintain synaptic plasticity which enables long-term potentiation (LTP) and hippocampus-dependent learning. In developing hippocampal neurons, promotes arborization of the dendritic tree and in mature neurons, promotes dendritic remodeling. Also regulates the migration of developing neurons. Participates in the modulation of skeletal muscle function in response to exercise. In slow-twitch muscles, is involved in regulation of sarcoplasmic reticulum (SR) Ca(2+) transport and in fast-twitch muscle participates in the control of Ca(2+) release from the SR through phosphorylation of triadin, a ryanodine receptor-coupling factor, and phospholamban (PLN/PLB), an endogenous inhibitor of SERCA2A/ATP2A2. In response to interferon-gamma (IFN-gamma) stimulation, catalyzes phosphorylation of STAT1, stimulating the JAK-STAT signaling pathway. Phosphorylates reticulophagy regulator RETREG1 at 'Thr-134' under endoplasmic reticulum stress conditions which enhances RETREG1 oligomerization and its membrane scission and reticulophagy activity. This Mus musculus (Mouse) protein is Calcium/calmodulin-dependent protein kinase type II subunit beta (Camk2b).